A 370-amino-acid polypeptide reads, in one-letter code: 3-dehydroquinate synthase (370 aa).

Residues 112–116, 136–137, Lys-149, Lys-158, and 176–179 each bind NAD(+); these read GVVGD, TS, and TLRT. Residues Glu-191, His-254, and His-276 each contribute to the Zn(2+) site.

Belongs to the sugar phosphate cyclases superfamily. Dehydroquinate synthase family. The cofactor is Co(2+). Zn(2+) serves as cofactor. NAD(+) is required as a cofactor.

It is found in the cytoplasm. The catalysed reaction is 7-phospho-2-dehydro-3-deoxy-D-arabino-heptonate = 3-dehydroquinate + phosphate. Its pathway is metabolic intermediate biosynthesis; chorismate biosynthesis; chorismate from D-erythrose 4-phosphate and phosphoenolpyruvate: step 2/7. In terms of biological role, catalyzes the conversion of 3-deoxy-D-arabino-heptulosonate 7-phosphate (DAHP) to dehydroquinate (DHQ). The chain is 3-dehydroquinate synthase from Xanthomonas oryzae pv. oryzae (strain PXO99A).